Here is an 84-residue protein sequence, read N- to C-terminus: Large ribosomal subunit protein bL27 (84 aa).

The tract at residues 1–22 is disordered; that stretch reads MAKTKAGGSTKNGRDSAGRRLG.

This sequence belongs to the bacterial ribosomal protein bL27 family.

This chain is Large ribosomal subunit protein bL27, found in Mesomycoplasma hyopneumoniae (strain 232) (Mycoplasma hyopneumoniae).